A 356-amino-acid polypeptide reads, in one-letter code: Dihydroorotate dehydrogenase (quinone) (356 aa).

FMN contacts are provided by residues 68–72 (AGFDK) and Thr-92. Lys-72 contacts substrate. 117–121 (NRMGF) is a substrate binding site. Residues Asn-145 and Asn-178 each coordinate FMN. A substrate-binding site is contributed by Asn-178. Catalysis depends on Ser-181, which acts as the Nucleophile. Position 183 (Asn-183) interacts with substrate. FMN contacts are provided by Lys-214 and Thr-242. 243–244 (NT) serves as a coordination point for substrate. FMN contacts are provided by residues Gly-266, Gly-295, and 316–317 (YT).

It belongs to the dihydroorotate dehydrogenase family. Type 2 subfamily. As to quaternary structure, monomer. The cofactor is FMN.

The protein resides in the cell membrane. The enzyme catalyses (S)-dihydroorotate + a quinone = orotate + a quinol. The protein operates within pyrimidine metabolism; UMP biosynthesis via de novo pathway; orotate from (S)-dihydroorotate (quinone route): step 1/1. In terms of biological role, catalyzes the conversion of dihydroorotate to orotate with quinone as electron acceptor. In Mycobacterium sp. (strain KMS), this protein is Dihydroorotate dehydrogenase (quinone).